Here is a 593-residue protein sequence, read N- to C-terminus: CTD kinase subunit alpha (593 aa).

Polar residues-rich tracts occupy residues 1-17 and 29-51; these read MSYS…TEPN and QLSG…FKNN. The tract at residues 1–262 is disordered; that stretch reads MSYSKSTIYR…ESVPAPLPSP (262 aa). Residues Ser56 and Ser58 each carry the phosphoserine modification. Positions 90–103 are enriched in basic residues; the sequence is RSRKSRRRKGKKAF. 2 positions are modified to phosphoserine: Ser104 and Ser109. A compositionally biased stretch (low complexity) spans 139–152; the sequence is SSSSASVSPISPSA. Positions 160 to 170 are enriched in polar residues; sequence QASSFRRSPPS. The span at 198–215 shows a compositional bias: low complexity; that stretch reads IPHETTSSDTQKKSSVSS. Positions 277-561 constitute a Protein kinase domain; that stretch reads YEKIDQIGEG…AHETLMHEYF (285 aa). ATP is bound by residues 283-291 and Lys306; that span reads IGEGTYGKV. Asp399 (proton acceptor) is an active-site residue.

The protein belongs to the protein kinase superfamily. CMGC Ser/Thr protein kinase family. CDC2/CDKX subfamily. In terms of assembly, CTDK-I consists of three subunits, ctk1/lsk1, ctk2/lsc1 and ctk3 (also called alpha, beta and gamma). Interacts with ctk2/lsc1. This interaction is dependent on kinase activity.

It is found in the nucleus. The protein localises to the nucleolus. It carries out the reaction [DNA-directed RNA polymerase] + ATP = phospho-[DNA-directed RNA polymerase] + ADP + H(+). Catalytic subunit of the CTDK-I complex, which hyperphosphorylates the C-terminal heptapeptide repeat domain (CTD) of the largest RNA polymerase II subunit. Involved in RNA polymerase II transcriptional elongation and pre-mRNA 3'-end processing. Together with ctk2/lsc1, required for the regulation of cytokinesis by phosphorylating 'Ser-2' residues found in the heptad repeats of the CTD. Required for nuclear localization of ctk2/lsc1. Positively regulates the septation initiation network (SIN) and promotes successful completion of cytokinesis in response to perturbation of the actomyosin ring. Acts in parallel to clp1 to promote actomyosin ring stability upon cytokinesis checkpoint activation. The chain is CTD kinase subunit alpha from Schizosaccharomyces pombe (strain 972 / ATCC 24843) (Fission yeast).